Consider the following 354-residue polypeptide: MTELKNDRFLRALQGQPVDVTPVWMMRQAGRYLPEYRATRARAGDFMGLCTNPQLACEVTLQPLQRYPLDAAILFSDILTVPDAMGLGLYFETGEGPKFRNPVRTAAQVEALPVVNAENELTYVLDAVKTIRHELNGAVPLIGFSGSPWTLMTYMVEGGSSKDFRRSKAMLYSEPEVARLLLDKLVASVTDYLNAQIRAGAQAVQIFDSWGGALAHDAYLEFSLKPMQQIVNGLIREHQGRQVPVILFTKGGGQWLEAMAETGVTALGLDWTTDIGNARERVGGKVALQGNMDPSVLYASTSAIRDEVGRILASYGHGSGHVFNLGHGITPEVDPVHAGAFINAVHELSAGYHQ.

Substrate-binding positions include 27–31, Asp-77, Tyr-154, Ser-209, and His-327; that span reads RQAGR.

The protein belongs to the uroporphyrinogen decarboxylase family. As to quaternary structure, homodimer.

Its subcellular location is the cytoplasm. The catalysed reaction is uroporphyrinogen III + 4 H(+) = coproporphyrinogen III + 4 CO2. Its pathway is porphyrin-containing compound metabolism; protoporphyrin-IX biosynthesis; coproporphyrinogen-III from 5-aminolevulinate: step 4/4. In terms of biological role, catalyzes the decarboxylation of four acetate groups of uroporphyrinogen-III to yield coproporphyrinogen-III. This Teredinibacter turnerae (strain ATCC 39867 / T7901) protein is Uroporphyrinogen decarboxylase.